Reading from the N-terminus, the 457-residue chain is G-protein coupled receptor 135 (457 aa).

The tract at residues 1 to 27 is disordered; it reads MEEQARPPSRPAASATLPGSAHPGGAA. The Extracellular portion of the chain corresponds to 1 to 64; sequence MEEQARPPSR…EAAGSRGPAP (64 aa). The N-linked (GlcNAc...) asparagine glycan is linked to asparagine 47. Residues 65 to 85 form a helical membrane-spanning segment; the sequence is LLWHGAAVAAQALVLLLIFLL. Over 86–109 the chain is Cytoplasmic; that stretch reads SSLGNCAVMGVIVKHRQLRTVTNA. Residues 110-130 traverse the membrane as a helical segment; sequence FILSLSLSDLLTALLCLPAAF. Residues 131 to 156 lie on the Extracellular side of the membrane; that stretch reads LDLFAPPGDSGPWRSFCAASRFFSSC. The chain crosses the membrane as a helical span at residues 157–177; the sequence is FGIVSTFSVALISLDRYCAIV. At 178–189 the chain is on the cytoplasmic side; that stretch reads RPPRDKLGRRRA. A helical membrane pass occupies residues 190–210; it reads LQLLAGAWLAALGFSLPWELL. The Extracellular segment spans residues 211–235; it reads RAPREPPTPQSFHRCLYRTSPDPAQ. The chain crosses the membrane as a helical span at residues 236-256; it reads LGAAYSVGLVVACYLLPFLLM. Residues 257–295 are Cytoplasmic-facing; it reads CFCRYHICKTVRLSDVRVRPMTTYARVLRFFSEVRTATT. A helical membrane pass occupies residues 296-316; it reads VLIMIVFVICCWGPYCFLVLL. Residues 317–329 lie on the Extracellular side of the membrane; it reads AATRQGQTTQAPS. Residues 330–350 form a helical membrane-spanning segment; the sequence is LLNVAAVWLTWANGAINPVIY. Residues 351-457 are Cytoplasmic-facing; sequence AIRNPNISMF…HKSETRDSSI (107 aa).

This sequence belongs to the G-protein coupled receptor 1 family. Interacts with MTNR1B. Interacts with ARRB1 and ARRB2 in a spontaneous and agonist-independent manner; leading to the internalization of GPR135 in the endosomal compartment.

The protein resides in the cell membrane. It localises to the endosome membrane. Orphan receptor. Has spontaneous activity for beta-arrestin recruitment. Shows a reciprocal regulatory interaction with the melatonin receptor MTNR1B most likely through receptor heteromerization. This Rattus norvegicus (Rat) protein is G-protein coupled receptor 135 (Gpr135).